We begin with the raw amino-acid sequence, 166 residues long: Cofilin-1 (166 aa).

Alanine 2 carries the N-acetylalanine modification. Phosphoserine is present on residues serine 3 and serine 8. Residues 4–153 (GVAVSDGVIK…KDRCTLAEKL (150 aa)) form the ADF-H domain. Lysine 13 is modified (N6-acetyllysine). Residue threonine 25 is modified to Phosphothreonine. Residues 30–34 (KKRKK) carry the Nuclear localization signal motif. Position 41 is a phosphoserine (serine 41). Phosphotyrosine is present on tyrosine 68. Residue lysine 73 is modified to N6-acetyllysine. Lysine 132 participates in a covalent cross-link: Glycyl lysine isopeptide (Lys-Gly) (interchain with G-Cter in SUMO2). Tyrosine 140 is modified (phosphotyrosine). Lysine 144 is modified (N6-acetyllysine). Position 156 is a phosphoserine (serine 156).

The protein belongs to the actin-binding proteins ADF family. Can bind G- and F-actin in a 1:1 ratio of cofilin to actin. It is a major component of intranuclear and cytoplasmic actin rods. Interacts with the subcortical maternal complex (SCMC) via interaction with TLE6 and NLRP5. Interacts with C9orf72. Post-translationally, inactivated by phosphorylation on Ser-3. Phosphorylated on Ser-3 in resting cells. Dephosphorylated by PDXP/chronophin; this restores its activity in promoting actin filament depolymerization. The phosphorylation of Ser-24 may prevent recognition of the nuclear localization signal. Phosphorylated via a ARRB1-RAC1-LIMK1-PAK1 cascade upon active ligand stimulation of atypical chemokine receptor ACKR2.

It localises to the nucleus matrix. It is found in the cytoplasm. The protein resides in the cytoskeleton. Its subcellular location is the cell projection. The protein localises to the ruffle membrane. It localises to the lamellipodium membrane. It is found in the lamellipodium. The protein resides in the growth cone. Its subcellular location is the axon. Binds to F-actin and exhibits pH-sensitive F-actin depolymerizing activity. Important for normal progress through mitosis and normal cytokinesis. In conjunction with the subcortical maternal complex (SCMC), plays an essential role for zygotes to progress beyond the first embryonic cell divisions via regulation of actin dynamics. Required for the centralization of the mitotic spindle and symmetric division of zygotes. Plays a role in the regulation of cell morphology and cytoskeletal organization in epithelial cells. Required for the up-regulation of atypical chemokine receptor ACKR2 from endosomal compartment to cell membrane, increasing its efficiency in chemokine uptake and degradation. Required for neural tube morphogenesis and neural crest cell migration. In Rattus norvegicus (Rat), this protein is Cofilin-1 (Cfl1).